Reading from the N-terminus, the 310-residue chain is tRNA pseudouridine synthase B (310 aa).

The active-site Nucleophile is Asp49.

It belongs to the pseudouridine synthase TruB family. Type 1 subfamily.

The enzyme catalyses uridine(55) in tRNA = pseudouridine(55) in tRNA. Responsible for synthesis of pseudouridine from uracil-55 in the psi GC loop of transfer RNAs. The polypeptide is tRNA pseudouridine synthase B (Rhizobium johnstonii (strain DSM 114642 / LMG 32736 / 3841) (Rhizobium leguminosarum bv. viciae)).